We begin with the raw amino-acid sequence, 378 residues long: WUSCHEL-related homeobox 9 (378 aa).

Disordered stretches follow at residues 1–60 (MASS…NPKP) and 123–173 (KHSL…GSQM). Residues 32–42 (SASHRSSPFSS) are compositionally biased toward low complexity. The segment covering 45 to 54 (EVERSPEPKP) has biased composition (basic and acidic residues). Residues 51–115 (EPKPRWNPKP…NRKSRSKHKL (65 aa)) constitute a DNA-binding region (homeobox; WUS-type). Composition is skewed to low complexity over residues 137-152 (PSAS…SSKS) and 161-171 (KNNTNLSLGGS).

This sequence belongs to the WUS homeobox family. In terms of tissue distribution, expressed in the basal cell and later at the boundary between suspensor and proembryo. Expressed at low levels in proliferating tissues post embryonically. Detected in vegetative shoot apical meristem, leaf primordia, floral meristems, emerging floral organs, epidermal layer of the placenta and in the upper portion of the root meristematic zone.

It is found in the nucleus. The protein resides in the cytoplasm. Its function is as follows. Homeodomain transcription factor required for meristem growth and early development. Promotes cell proliferation and prevents premature differentiation in meristematic tissues during postembryonic development. Essential for maintaining tissue growth during embryogenesis. May act by repressing TSS to promote meristematic proliferation. Involved in the transcriptional activation of a subset of cytokinin response factors. May act as a negative regulator of cytokinin signaling in the dark. The polypeptide is WUSCHEL-related homeobox 9 (Arabidopsis thaliana (Mouse-ear cress)).